The primary structure comprises 1434 residues: Probable ATP-dependent RNA helicase spindle-E (1434 aa).

In terms of domain architecture, Helicase ATP-binding spans 125–292 (LAAINAHPVV…FTTTNSIPPV (168 aa)). 138-145 (GETGCGKT) provides a ligand contact to ATP. The short motif at 238 to 241 (DEVH) is the DEAH box element. In terms of domain architecture, Helicase C-terminal spans 354–526 (QSRQSYDEAL…NSVLKAKVLN (173 aa)). The Tudor domain occupies 938 to 1001 (ASAIAKGMMV…RLMPRELTEQ (64 aa)).

This sequence belongs to the DEAD box helicase family. DEAH subfamily.

It localises to the cytoplasm. Its subcellular location is the perinuclear region. The protein resides in the cytoplasmic ribonucleoprotein granule. It carries out the reaction ATP + H2O = ADP + phosphate + H(+). Probable ATP-binding RNA helicase which plays a central role during spermatogenesis and oogenesis by repressing transposable elements and preventing their mobilization, which is essential for the germline integrity. Acts via the piRNA metabolic process, which mediates the repression of transposable elements during meiosis by forming complexes composed of piRNAs and Piwi and govern the methylation and subsequent repression of transposons. Involved in the repression of LTR retrotransposon copia. Also involved in telomere regulation by repressing specialized telomeric retroelements HeT-A, TAHRE, and TART; Drosophila telomeres being maintained by transposition of specialized telomeric retroelements. Involved in telomeric trans-silencing, a repression mechanism by which a transposon or a transgene inserted in subtelomeric heterochromatin has the capacity to repress in trans in the female germline, a homologous transposon, or transgene located in euchromatin. Involved in the repression of testis-expressed Stellate genes by the homologous Su(Ste) repeats. Required for anteroposterior and dorsoventral axis formation during oogenesis. Key component of the perinuclear meiotic nuage, an electron dense structure involved in the post-transcriptional regulation of transposons and mRNAs; required for recruitment of other nuage comonents including vas, krimp, aub and mael. May have a role in production of piwi-interacting RNA (piRNA). This chain is Probable ATP-dependent RNA helicase spindle-E, found in Drosophila melanogaster (Fruit fly).